We begin with the raw amino-acid sequence, 644 residues long: Polyglycine hydrolase (644 aa).

The first 23 residues, 1-23, serve as a signal peptide directing secretion; the sequence is MYTSRSLFSTLASCLSLATLVAS. Residues asparagine 100, asparagine 144, asparagine 159, asparagine 244, and asparagine 340 are each glycosylated (N-linked (GlcNAc...) asparagine). Cysteine 149 and cysteine 183 are joined by a disulfide. The active site involves serine 369. 4 N-linked (GlcNAc...) asparagine glycosylation sites follow: asparagine 389, asparagine 410, asparagine 443, and asparagine 486.

The protein belongs to the peptidase S12 family.

Its subcellular location is the secreted. The enzyme catalyses a glycyl-glycyl-[protein] + H2O = N-terminal glycyl-[protein] + [protein]-C-terminal glycine. Its activity is regulated as follows. Not inhibited by phenylmethylsulfonyl fluoride (PMSF; serine peptidase class S1 inhibitor), clavulanic acid (beta-lactamase inhibitor) or ampicillin (penicillin-binding protein (PBP) inhibitor). In terms of biological role, serine-type endopeptidase that cleaves Gly-Gly bonds in the polyglycine linker of host plant class IV chitinases to disrupt their chitin-binding, and thereby plays a role in lowering the defense responses of the host to the fungus. Degrades Z.mays Endochitinase A (CHIA). Has low proteolytic activity on Z.mays Endochitinase B (CHIB). The sequence is that of Polyglycine hydrolase from Cochliobolus carbonum (strain 26-R-13) (Maize leaf spot fungus).